The chain runs to 314 residues: Carbamate kinase (314 aa).

It belongs to the carbamate kinase family. Homodimer.

It carries out the reaction hydrogencarbonate + NH4(+) + ATP = carbamoyl phosphate + ADP + H2O + H(+). It participates in metabolic intermediate metabolism; carbamoyl phosphate degradation; CO(2) and NH(3) from carbamoyl phosphate: step 1/1. The chain is Carbamate kinase (CBK) from Trichomonas vaginalis.